The primary structure comprises 346 residues: MEDLQLVLFVLGAIAIVAVLVHGFWSIRRQQPKSLKDSPMGNFYKKQAERGEGAPKRVDADGFDADGIGAVRVRKANEAHTPEAPAFNPYLKQEAKTQPQPVEPVQVEPKPLFEQEPSMAQPDFSLQSPTAKEQHRGPKASRQEPVLQGHSANLAQAHVGQSHAAMVAQKVAEEQRAQVQMPTQTALFDDEEPYEEEQSQAVEQADDDLGEPRDVLVLHVVAKEGQQLNGAELLPCFLTLNFKYGDMNIFHRHVDNAGNGKVLFSIANMVKPGIFDPDNMEQFSTQGVVFFMTLPCYGDALMNFSIMLNSARQLADDIDAVVLDGQRQPWGEFTKQDYLHRIRANA.

Residues 1–6 are Periplasmic-facing; the sequence is MEDLQL. A helical membrane pass occupies residues 7 to 27; that stretch reads VLFVLGAIAIVAVLVHGFWSI. Over 28 to 346 the chain is Cytoplasmic; that stretch reads RRQQPKSLKD…DYLHRIRANA (319 aa). Disordered stretches follow at residues 76 to 103 and 121 to 145; these read ANEAHTPEAPAFNPYLKQEAKTQPQPVE and QPDFSLQSPTAKEQHRGPKASRQEP.

This sequence belongs to the ZipA family. As to quaternary structure, interacts with FtsZ via their C-terminal domains.

The protein localises to the cell inner membrane. Essential cell division protein that stabilizes the FtsZ protofilaments by cross-linking them and that serves as a cytoplasmic membrane anchor for the Z ring. Also required for the recruitment to the septal ring of downstream cell division proteins. This Shewanella sp. (strain MR-7) protein is Cell division protein ZipA.